Here is a 1219-residue protein sequence, read N- to C-terminus: FYVE, RhoGEF and PH domain-containing protein 5 (1219 aa).

4 disordered regions span residues 1 to 85, 94 to 113, 201 to 227, and 310 to 367; these read MGSP…SCQI, EEDFSPTLTENPYEIFPTES, SDTQAASGTLSGYSTWEEGDSEGGQVP, and GRES…PSSV. Residues 23–50 show a composition bias toward acidic residues; it reads EVFEEDSADAAEGEDQIEQEEPPNCDEE. Over residues 201-214 the composition is skewed to polar residues; that stretch reads SDTQAASGTLSGYS. Over residues 319-337 the composition is skewed to basic and acidic residues; it reads REPEGAGLDSHRVRRKEDN. The span at 346–356 shows a compositional bias: polar residues; sequence SSGSFSQRSHL. Residues 357–367 are compositionally biased toward low complexity; it reads PSSGTSTPSSV. At Thr-555 the chain carries Phosphothreonine. Low complexity predominate over residues 586 to 599; that stretch reads ESKQQSSEQEAESA. The tract at residues 586-644 is disordered; sequence ESKQQSSEQEAESAYTEPYKVCPISAAPREDLTSDEEQGSSEEEDSASRDPSLSHKGEG. Residues 618 to 630 show a composition bias toward acidic residues; the sequence is TSDEEQGSSEEED. Positions 631-644 are enriched in basic and acidic residues; the sequence is SASRDPSLSHKGEG. Residues 647–840 enclose the DH domain; that stretch reads RALVIAQELL…SKVTDRANES (194 aa). The PH 1 domain maps to 869 to 963; that stretch reads EFLKEGTLMR…WHYCLSRALP (95 aa). The FYVE-type zinc-finger motif lies at 998–1057; the sequence is VTHAMMCMNCGCDFSLTVRRHHCHACGKIVCRNCSRNKYPLKCLKNRMAKVCDGCFRELK. Zn(2+)-binding residues include Cys-1004, Cys-1007, Cys-1020, Cys-1023, Cys-1028, Cys-1031, Cys-1049, and Cys-1052. A PH 2 domain is found at 1120 to 1218; the sequence is GSAISGYLSR…WMEAMEDASV (99 aa).

As to expression, expressed in highly vascularized tissues, such as lung, kidney and ovary.

Its subcellular location is the cytoplasm. It is found in the cytoskeleton. The protein localises to the cell projection. The protein resides in the ruffle membrane. It localises to the endoplasmic reticulum. Its subcellular location is the golgi apparatus. It is found in the early endosome. In terms of biological role, activates CDC42, a member of the Ras-like family of Rho- and Rac proteins, by exchanging bound GDP for free GTP. Mediates VEGF-induced CDC42 activation. May regulate proangiogenic action of VEGF in vascular endothelial cells, including network formation, directional movement and proliferation. May play a role in regulating the actin cytoskeleton and cell shape. The chain is FYVE, RhoGEF and PH domain-containing protein 5 (Fgd5) from Mus musculus (Mouse).